Reading from the N-terminus, the 102-residue chain is MLRHKTKRGHASLDCLKVFDGIPPPYDKKKRMVVPAALKVVRLKPTRKFALLGRQAQEVRWKYQAVTATLEEKRKEKAKIHYWKKKQLMRLRKQAEKNVKKN.

The protein belongs to the universal ribosomal protein uL13 family.

The chain is Putative ribosomal protein uL13-like (RPL13AP3) from Homo sapiens (Human).